The chain runs to 285 residues: Aldo-keto reductase (285 aa).

Alanine 165–lysine 175 is an NADP(+) binding site.

It belongs to the aldo/keto reductase family. Aldo/keto reductase 2 subfamily.

This chain is Aldo-keto reductase, found in Babesia bovis.